A 241-amino-acid polypeptide reads, in one-letter code: Pyridoxine 5'-phosphate synthase (241 aa).

N7 is a 3-amino-2-oxopropyl phosphate binding site. Position 9–10 (9–10) interacts with 1-deoxy-D-xylulose 5-phosphate; it reads DH. R18 serves as a coordination point for 3-amino-2-oxopropyl phosphate. The active-site Proton acceptor is the H43. 1-deoxy-D-xylulose 5-phosphate is bound by residues R45 and H50. Residue E70 is the Proton acceptor of the active site. T100 provides a ligand contact to 1-deoxy-D-xylulose 5-phosphate. H191 acts as the Proton donor in catalysis. 3-amino-2-oxopropyl phosphate-binding positions include G192 and 213 to 214; that span reads GH.

This sequence belongs to the PNP synthase family. Homooctamer; tetramer of dimers.

It is found in the cytoplasm. It catalyses the reaction 3-amino-2-oxopropyl phosphate + 1-deoxy-D-xylulose 5-phosphate = pyridoxine 5'-phosphate + phosphate + 2 H2O + H(+). It functions in the pathway cofactor biosynthesis; pyridoxine 5'-phosphate biosynthesis; pyridoxine 5'-phosphate from D-erythrose 4-phosphate: step 5/5. Functionally, catalyzes the complicated ring closure reaction between the two acyclic compounds 1-deoxy-D-xylulose-5-phosphate (DXP) and 3-amino-2-oxopropyl phosphate (1-amino-acetone-3-phosphate or AAP) to form pyridoxine 5'-phosphate (PNP) and inorganic phosphate. This Maridesulfovibrio salexigens (strain ATCC 14822 / DSM 2638 / NCIMB 8403 / VKM B-1763) (Desulfovibrio salexigens) protein is Pyridoxine 5'-phosphate synthase.